The following is a 440-amino-acid chain: Glucoside xylosyltransferase 1 (440 aa).

Residues 1-6 (MRRYLR) lie on the Cytoplasmic side of the membrane. Residues 7–29 (VVVLCVACGFCSLLYAFSQLAVS) traverse the membrane as a helical; Signal-anchor for type II membrane protein segment. Topologically, residues 30 to 440 (LEEGTGGGGG…DRYARSPKEK (411 aa)) are lumenal. Residues N173, N237, and N278 are each glycosylated (N-linked (GlcNAc...) asparagine).

The protein belongs to the glycosyltransferase 8 family.

The protein localises to the membrane. The enzyme catalyses 3-O-(beta-D-glucosyl)-L-seryl-[EGF-like domain protein] + UDP-alpha-D-xylose = 3-O-[alpha-D-xylosyl-(1-&gt;3)-beta-D-glucosyl]-L-seryl-[EGF-like domain protein] + UDP + H(+). Functionally, glycosyltransferase which elongates the O-linked glucose attached to EGF-like repeats in the extracellular domain of Notch proteins by catalyzing the addition of xylose. In Homo sapiens (Human), this protein is Glucoside xylosyltransferase 1 (GXYLT1).